The following is a 349-amino-acid chain: Heat-inducible transcription repressor HrcA (349 aa).

The protein belongs to the HrcA family.

Negative regulator of class I heat shock genes (grpE-dnaK-dnaJ and groELS operons). Prevents heat-shock induction of these operons. The sequence is that of Heat-inducible transcription repressor HrcA from Xylella fastidiosa (strain M23).